Consider the following 186-residue polypeptide: Potassium-transporting ATPase KdpC subunit 1 (186 aa).

The helical transmembrane segment at 10–30 (LTIITMVLCGFLFPLAITLIG) threads the bilayer.

Belongs to the KdpC family. As to quaternary structure, the system is composed of three essential subunits: KdpA, KdpB and KdpC.

It is found in the cell membrane. In terms of biological role, part of the high-affinity ATP-driven potassium transport (or Kdp) system, which catalyzes the hydrolysis of ATP coupled with the electrogenic transport of potassium into the cytoplasm. This subunit acts as a catalytic chaperone that increases the ATP-binding affinity of the ATP-hydrolyzing subunit KdpB by the formation of a transient KdpB/KdpC/ATP ternary complex. In Staphylococcus aureus (strain Mu50 / ATCC 700699), this protein is Potassium-transporting ATPase KdpC subunit 1.